A 731-amino-acid polypeptide reads, in one-letter code: 1,4-alpha-glucan branching enzyme GlgB (731 aa).

The active-site Nucleophile is the aspartate 409. The active-site Proton donor is the glutamate 462.

This sequence belongs to the glycosyl hydrolase 13 family. GlgB subfamily. Monomer.

It catalyses the reaction Transfers a segment of a (1-&gt;4)-alpha-D-glucan chain to a primary hydroxy group in a similar glucan chain.. It functions in the pathway glycan biosynthesis; glycogen biosynthesis. Its function is as follows. Catalyzes the formation of the alpha-1,6-glucosidic linkages in glycogen by scission of a 1,4-alpha-linked oligosaccharide from growing alpha-1,4-glucan chains and the subsequent attachment of the oligosaccharide to the alpha-1,6 position. In Roseobacter denitrificans (strain ATCC 33942 / OCh 114) (Erythrobacter sp. (strain OCh 114)), this protein is 1,4-alpha-glucan branching enzyme GlgB.